A 388-amino-acid chain; its full sequence is 4-hydroxy-tetrahydrodipicolinate synthase 1, chloroplastic (388 aa).

Residues 1-51 (MPYLQPPRPHPHPHPTSRLSRASPPSPFPFFPAGTSRSGRLQPVPVSGHSA) form a disordered region. The transit peptide at 1-62 (MPYLQPPRPH…RVSKGKFAVA (62 aa)) directs the protein to the chloroplast. Threonine 131 lines the pyruvate pocket. Catalysis depends on tyrosine 217, which acts as the Proton donor/acceptor. The active-site Schiff-base intermediate with substrate is lysine 245. Isoleucine 284 lines the pyruvate pocket.

This sequence belongs to the DapA family. In terms of assembly, tetramer of modified subunits derived from two genes in different combinations.

It is found in the plastid. Its subcellular location is the chloroplast. It carries out the reaction L-aspartate 4-semialdehyde + pyruvate = (2S,4S)-4-hydroxy-2,3,4,5-tetrahydrodipicolinate + H2O + H(+). It participates in amino-acid biosynthesis; L-lysine biosynthesis via DAP pathway; (S)-tetrahydrodipicolinate from L-aspartate: step 3/4. Sensitive to lysine inhibition. This inhibition increase in an allosteric manner with increasing concentration of the inhibitor. Its function is as follows. Catalyzes the condensation of (S)-aspartate-beta-semialdehyde [(S)-ASA] and pyruvate to 4-hydroxy-tetrahydrodipicolinate (HTPA). In Triticum aestivum (Wheat), this protein is 4-hydroxy-tetrahydrodipicolinate synthase 1, chloroplastic.